Consider the following 437-residue polypeptide: MRNTELVQWFRQSTPYVNMHREKTFVIMLDGNAIAHPNFINITNDIGLLHSLGIKLVIVFGARCQIDELLAKNQMSSTYHKHIRITDSKTLEVVKQAVGGLHYDIFSRLSLRLPNSPVLNVVSSNAVLAQPLGVIDGVDYGLSGKIRRINIEGIQQQLAQDAIVVIGPIAPSVTGEMFNLPFEEIATQIAIKLKADKLIGFCDQQGILDSEGNVLSDLHPREAKRYLTQFIESGQYHHSAARFLQAAIEACHAGIKRSHLLSYKEDGSLLQELFSRDGIGTQLSEESSENIRLATSFDIPGLLNLIRPLEEQGILVKRSREQLEMEISNYTIIERDGIVIACAALNHYPQEKMAEMACVAVHPDYRDSSRGDVLLEAIKRRAYKLQVEKLFVLTTRTTQWFQERGFVLSTTDDLPKEKREHYNYQRMSKILILDLGQ.

The N-acetyltransferase domain maps to 289–429 (ENIRLATSFD…EHYNYQRMSK (141 aa)).

It belongs to the acetyltransferase family. ArgA subfamily.

It is found in the cytoplasm. The enzyme catalyses L-glutamate + acetyl-CoA = N-acetyl-L-glutamate + CoA + H(+). The protein operates within amino-acid biosynthesis; L-arginine biosynthesis; N(2)-acetyl-L-ornithine from L-glutamate: step 1/4. The chain is Amino-acid acetyltransferase from Actinobacillus pleuropneumoniae serotype 5b (strain L20).